Consider the following 185-residue polypeptide: Ribosome-recycling factor (185 aa).

It belongs to the RRF family.

Its subcellular location is the cytoplasm. In terms of biological role, responsible for the release of ribosomes from messenger RNA at the termination of protein biosynthesis. May increase the efficiency of translation by recycling ribosomes from one round of translation to another. This is Ribosome-recycling factor from Campylobacter hominis (strain ATCC BAA-381 / DSM 21671 / CCUG 45161 / LMG 19568 / NCTC 13146 / CH001A).